The chain runs to 147 residues: UPF0306 protein YhbP (147 aa).

This sequence belongs to the UPF0306 family.

This is UPF0306 protein YhbP from Salmonella schwarzengrund (strain CVM19633).